Reading from the N-terminus, the 274-residue chain is Nitrogenase iron protein (274 aa).

8–15 serves as a coordination point for ATP; the sequence is GKGGIGKS. A [4Fe-4S] cluster-binding site is contributed by Cys-94. Arg-97 carries the post-translational modification ADP-ribosylarginine; by dinitrogenase reductase ADP-ribosyltransferase. Cys-131 serves as a coordination point for [4Fe-4S] cluster.

The protein belongs to the NifH/BchL/ChlL family. As to quaternary structure, homodimer. It depends on [4Fe-4S] cluster as a cofactor. In terms of processing, the reversible ADP-ribosylation of Arg-97 inactivates the nitrogenase reductase and regulates nitrogenase activity.

The catalysed reaction is N2 + 8 reduced [2Fe-2S]-[ferredoxin] + 16 ATP + 16 H2O = H2 + 8 oxidized [2Fe-2S]-[ferredoxin] + 2 NH4(+) + 16 ADP + 16 phosphate + 6 H(+). Functionally, the key enzymatic reactions in nitrogen fixation are catalyzed by the nitrogenase complex, which has 2 components: the iron protein and the molybdenum-iron protein. This Chlorobium phaeovibrioides (strain DSM 265 / 1930) (Prosthecochloris vibrioformis (strain DSM 265)) protein is Nitrogenase iron protein.